A 75-amino-acid polypeptide reads, in one-letter code: Alpha-elapitoxin-Bc2c (75 aa).

Residues 1 to 2 (YT) form the signal peptide. 5 disulfide bridges follow: Cys-5–Cys-24, Cys-17–Cys-45, Cys-30–Cys-34, Cys-49–Cys-60, and Cys-61–Cys-66.

The protein belongs to the three-finger toxin family. Long-chain subfamily. Type II alpha-neurotoxin sub-subfamily. Monomer in solution, homodimer in crystal state. In terms of tissue distribution, expressed by the venom gland.

It is found in the secreted. Its function is as follows. Binds to muscular and neuronal nicotinic acetylcholine receptor (nAChR) and inhibits acetylcholine from binding to the receptor, thereby impairing neuromuscular and neuronal transmission. Blocks muscle type nAChR. Also binds with high affinity to alpha-7/CHRNA7 nAChRs. In addition, shows a weak inhibition of neuronal alpha-3-beta-2/CHRNA3-CHRNB2 nAChR. Selectively binds to alpha-1-delta subunit interface of the mouse muscle nicotinic acetylcholine receptor, with a 10-fold higher affinity for the adult than for the fetal receptors. In vivo, when intraperitoneally injected into mice, causes flaccid paralysis and respiratory distress, followed by death within 2-4 hours. In Bungarus candidus (Malayan krait), this protein is Alpha-elapitoxin-Bc2c.